Consider the following 492-residue polypeptide: N-succinylglutamate 5-semialdehyde dehydrogenase (492 aa).

220–225 (GSANTG) serves as a coordination point for NAD(+). Catalysis depends on residues Glu243 and Cys277.

It belongs to the aldehyde dehydrogenase family. AstD subfamily.

It carries out the reaction N-succinyl-L-glutamate 5-semialdehyde + NAD(+) + H2O = N-succinyl-L-glutamate + NADH + 2 H(+). Its pathway is amino-acid degradation; L-arginine degradation via AST pathway; L-glutamate and succinate from L-arginine: step 4/5. Its function is as follows. Catalyzes the NAD-dependent reduction of succinylglutamate semialdehyde into succinylglutamate. The chain is N-succinylglutamate 5-semialdehyde dehydrogenase from Escherichia coli (strain SE11).